Reading from the N-terminus, the 332-residue chain is Protoheme IX farnesyltransferase (332 aa).

7 consecutive transmembrane segments (helical) span residues 63–83 (LICT…LNCL), 109–129 (TVFL…ISGV), 132–152 (LAAG…TIIL), 160–180 (IVFG…AATG), 188–208 (WLFG…AILL), 245–265 (ILGV…LLPF), and 286–306 (AKGL…LLLI).

It belongs to the UbiA prenyltransferase family. Protoheme IX farnesyltransferase subfamily.

The protein localises to the cell inner membrane. The enzyme catalyses heme b + (2E,6E)-farnesyl diphosphate + H2O = Fe(II)-heme o + diphosphate. Its pathway is porphyrin-containing compound metabolism; heme O biosynthesis; heme O from protoheme: step 1/1. Functionally, converts heme B (protoheme IX) to heme O by substitution of the vinyl group on carbon 2 of heme B porphyrin ring with a hydroxyethyl farnesyl side group. The chain is Protoheme IX farnesyltransferase from Prochlorococcus marinus (strain MIT 9515).